Reading from the N-terminus, the 894-residue chain is DNA mismatch repair protein MutS (894 aa).

Residue 629-636 (GPNMGGKS) participates in ATP binding. Residues 819 to 840 (TPTPQLDLFAPPPHPDTSDDDE) are disordered.

Belongs to the DNA mismatch repair MutS family.

This protein is involved in the repair of mismatches in DNA. It is possible that it carries out the mismatch recognition step. This protein has a weak ATPase activity. The protein is DNA mismatch repair protein MutS of Cupriavidus pinatubonensis (strain JMP 134 / LMG 1197) (Cupriavidus necator (strain JMP 134)).